Reading from the N-terminus, the 364-residue chain is Protein FAM81A (364 aa).

A coiled-coil region spans residues 80–107; the sequence is IRNITAIVKQLNRDIEVLQEQIRARDNI. The segment covering 275–300 has biased composition (basic and acidic residues); it reads ARLDKIEESQRRNAEGQRKPEEEKVH. Residues 275 to 301 form a disordered region; it reads ARLDKIEESQRRNAEGQRKPEEEKVHG.

The protein belongs to the FAM81 family. Interacts with DLG4/PSD-95, GRIN2B/GLUN2B and SYNGAP1; the interactions facilitate condensate formation. As to expression, highly expressed in brain (at protein level).

It is found in the postsynaptic density. The protein localises to the cytoplasm. In terms of biological role, facilitates the interaction and assembly of proteins within the postsynaptic density by promoting the condensation of postsynaptic proteins via liquid-liquid phase separation. Required for neuronal activity. Accumulation at the postsynaptic density results in enlargement of dendritic spines. The chain is Protein FAM81A from Rattus norvegicus (Rat).